The primary structure comprises 171 residues: Protein GrpE (171 aa).

The tract at residues 1-22 (MNHEHPDIESQQSAADAAAAAG) is disordered.

It belongs to the GrpE family. As to quaternary structure, homodimer.

It is found in the cytoplasm. Its function is as follows. Participates actively in the response to hyperosmotic and heat shock by preventing the aggregation of stress-denatured proteins, in association with DnaK and GrpE. It is the nucleotide exchange factor for DnaK and may function as a thermosensor. Unfolded proteins bind initially to DnaJ; upon interaction with the DnaJ-bound protein, DnaK hydrolyzes its bound ATP, resulting in the formation of a stable complex. GrpE releases ADP from DnaK; ATP binding to DnaK triggers the release of the substrate protein, thus completing the reaction cycle. Several rounds of ATP-dependent interactions between DnaJ, DnaK and GrpE are required for fully efficient folding. The protein is Protein GrpE of Stenotrophomonas maltophilia (strain R551-3).